The primary structure comprises 65 residues: Large ribosomal subunit protein bL35 (65 aa).

The protein belongs to the bacterial ribosomal protein bL35 family.

The chain is Large ribosomal subunit protein bL35 from Paraburkholderia phytofirmans (strain DSM 17436 / LMG 22146 / PsJN) (Burkholderia phytofirmans).